Here is a 498-residue protein sequence, read N- to C-terminus: uncharacterized protein (498 aa).

329–336 (GNPGTGKS) is an ATP binding site.

It is found in the secreted. The protein resides in the cell wall. This is an uncharacterized protein from Mycobacterium tuberculosis (strain CDC 1551 / Oshkosh).